The primary structure comprises 258 residues: Hydroxyacylglutathione hydrolase (258 aa).

Positions 52, 54, 56, 57, 109, 126, and 164 each coordinate Zn(2+).

The protein belongs to the metallo-beta-lactamase superfamily. Glyoxalase II family. Monomer. Zn(2+) serves as cofactor.

The catalysed reaction is an S-(2-hydroxyacyl)glutathione + H2O = a 2-hydroxy carboxylate + glutathione + H(+). The protein operates within secondary metabolite metabolism; methylglyoxal degradation; (R)-lactate from methylglyoxal: step 2/2. Its function is as follows. Thiolesterase that catalyzes the hydrolysis of S-D-lactoyl-glutathione to form glutathione and D-lactic acid. The chain is Hydroxyacylglutathione hydrolase from Xylella fastidiosa (strain M12).